The following is a 379-amino-acid chain: Queuine tRNA-ribosyltransferase (379 aa).

Asp-94 acts as the Proton acceptor in catalysis. Residues 94–98, Asp-148, Gln-191, and Gly-218 contribute to the substrate site; that span reads DSGGF. The RNA binding stretch occupies residues 249–255; sequence GVGSPDS. Asp-268 acts as the Nucleophile in catalysis. The interval 273–277 is RNA binding; important for wobble base 34 recognition; that stretch reads TRIAR. Residues Cys-306, Cys-308, Cys-311, and His-337 each coordinate Zn(2+).

Belongs to the queuine tRNA-ribosyltransferase family. In terms of assembly, homodimer. Within each dimer, one monomer is responsible for RNA recognition and catalysis, while the other monomer binds to the replacement base PreQ1. Zn(2+) is required as a cofactor.

It carries out the reaction 7-aminomethyl-7-carbaguanine + guanosine(34) in tRNA = 7-aminomethyl-7-carbaguanosine(34) in tRNA + guanine. The protein operates within tRNA modification; tRNA-queuosine biosynthesis. Catalyzes the base-exchange of a guanine (G) residue with the queuine precursor 7-aminomethyl-7-deazaguanine (PreQ1) at position 34 (anticodon wobble position) in tRNAs with GU(N) anticodons (tRNA-Asp, -Asn, -His and -Tyr). Catalysis occurs through a double-displacement mechanism. The nucleophile active site attacks the C1' of nucleotide 34 to detach the guanine base from the RNA, forming a covalent enzyme-RNA intermediate. The proton acceptor active site deprotonates the incoming PreQ1, allowing a nucleophilic attack on the C1' of the ribose to form the product. After dissociation, two additional enzymatic reactions on the tRNA convert PreQ1 to queuine (Q), resulting in the hypermodified nucleoside queuosine (7-(((4,5-cis-dihydroxy-2-cyclopenten-1-yl)amino)methyl)-7-deazaguanosine). In Listeria monocytogenes serotype 4a (strain HCC23), this protein is Queuine tRNA-ribosyltransferase.